The primary structure comprises 753 residues: 5-methyltetrahydropteroyltriglutamate--homocysteine methyltransferase (753 aa).

Residues 17 to 20 (RELK) and lysine 117 contribute to the 5-methyltetrahydropteroyltri-L-glutamate site. Residues 431–433 (IGS) and glutamate 484 contribute to the L-homocysteine site. Residues 431-433 (IGS) and glutamate 484 contribute to the L-methionine site. 5-methyltetrahydropteroyltri-L-glutamate contacts are provided by residues 515–516 (RC) and tryptophan 561. Position 599 (aspartate 599) interacts with L-homocysteine. Aspartate 599 is an L-methionine binding site. A 5-methyltetrahydropteroyltri-L-glutamate-binding site is contributed by glutamate 605. Zn(2+) is bound by residues histidine 641, cysteine 643, and glutamate 665. Histidine 694 serves as the catalytic Proton donor. A Zn(2+)-binding site is contributed by cysteine 726.

Belongs to the vitamin-B12 independent methionine synthase family. Requires Zn(2+) as cofactor.

The enzyme catalyses 5-methyltetrahydropteroyltri-L-glutamate + L-homocysteine = tetrahydropteroyltri-L-glutamate + L-methionine. The protein operates within amino-acid biosynthesis; L-methionine biosynthesis via de novo pathway; L-methionine from L-homocysteine (MetE route): step 1/1. In terms of biological role, catalyzes the transfer of a methyl group from 5-methyltetrahydrofolate to homocysteine resulting in methionine formation. The sequence is that of 5-methyltetrahydropteroyltriglutamate--homocysteine methyltransferase from Shigella boydii serotype 4 (strain Sb227).